We begin with the raw amino-acid sequence, 873 residues long: DNA mismatch repair protein MutS (873 aa).

601 to 608 is an ATP binding site; that stretch reads GPNMSGKS.

It belongs to the DNA mismatch repair MutS family.

Functionally, this protein is involved in the repair of mismatches in DNA. It is possible that it carries out the mismatch recognition step. This protein has a weak ATPase activity. This is DNA mismatch repair protein MutS from Staphylococcus epidermidis (strain ATCC 12228 / FDA PCI 1200).